Reading from the N-terminus, the 407-residue chain is Uronyl 2-sulfotransferase (407 aa).

The segment at 1–20 (MKKKQQQHPGGGTDPWPHGA) is disordered. Over 1 to 49 (MKKKQQQHPGGGTDPWPHGAPVGGAPPCLGSCKRRIPLLPFLRFSLRDY) the chain is Cytoplasmic. The chain crosses the membrane as a helical; Signal-anchor for type II membrane protein span at residues 50 to 70 (GFCMATLLVFCLGSLFYQLSG). Over 71–407 (GPPRFLLDLR…EKWLEDIYKR (337 aa)) the chain is Lumenal. N-linked (GlcNAc...) asparagine glycosylation is found at N85, N141, and N156. H169 is a catalytic residue. 2 N-linked (GlcNAc...) asparagine glycosylation sites follow: N174 and N320. Over residues 386–400 (TEEPIDDEEQDDEKW) the composition is skewed to acidic residues. The tract at residues 386–407 (TEEPIDDEEQDDEKWLEDIYKR) is disordered.

Belongs to the sulfotransferase 3 family.

Its subcellular location is the golgi apparatus membrane. Its function is as follows. Sulfotransferase that catalyzes the transfer of sulfate to the position 2 of uronyl residues in glycosaminoglycan chains. Has mainly activity toward iduronyl residues in dermatan sulfate, and weaker activity toward glucuronyl residues of chondroitin sulfate. Has no activity toward desulfated N-resulfated heparin. In Mus musculus (Mouse), this protein is Uronyl 2-sulfotransferase.